A 122-amino-acid chain; its full sequence is Small ribosomal subunit protein uS13 (122 aa).

The disordered stretch occupies residues glycine 95–lysine 122.

The protein belongs to the universal ribosomal protein uS13 family. In terms of assembly, part of the 30S ribosomal subunit. Forms a loose heterodimer with protein S19. Forms two bridges to the 50S subunit in the 70S ribosome.

Located at the top of the head of the 30S subunit, it contacts several helices of the 16S rRNA. In the 70S ribosome it contacts the 23S rRNA (bridge B1a) and protein L5 of the 50S subunit (bridge B1b), connecting the 2 subunits; these bridges are implicated in subunit movement. Contacts the tRNAs in the A and P-sites. The chain is Small ribosomal subunit protein uS13 from Nitratidesulfovibrio vulgaris (strain DSM 19637 / Miyazaki F) (Desulfovibrio vulgaris).